We begin with the raw amino-acid sequence, 273 residues long: MALRNFNPITPSLRELVQVDRTSLWKGRPLKSLTKGISKTGGRNNQGRITSWHRGGGHKKLYRIIDFKRNKIDISAVVERIEYDPNRTAFIALIKYEDGEYSYILAPQKLSVGDRVMSSQDADIKIGNCLPLKFIPVGTTLHNVEMKVGKGGQIARSAGTSVDLVGKDSGYAQIKLRSGEFRLVPLDCKATIGSISNPDRKNINLGKAGRNRWLGWRPHVRGVAMNPVDHPHGGGEGKTSGGRHPVTPWGFPTKGKKTRKNKRTSKFIVKKRK.

A disordered region spans residues 228–273 (VDHPHGGGEGKTSGGRHPVTPWGFPTKGKKTRKNKRTSKFIVKKRK). Over residues 254–273 (KGKKTRKNKRTSKFIVKKRK) the composition is skewed to basic residues.

This sequence belongs to the universal ribosomal protein uL2 family. As to quaternary structure, part of the 50S ribosomal subunit. Forms a bridge to the 30S subunit in the 70S ribosome.

Functionally, one of the primary rRNA binding proteins. Required for association of the 30S and 50S subunits to form the 70S ribosome, for tRNA binding and peptide bond formation. It has been suggested to have peptidyltransferase activity; this is somewhat controversial. Makes several contacts with the 16S rRNA in the 70S ribosome. This chain is Large ribosomal subunit protein uL2, found in Rickettsia akari (strain Hartford).